Here is a 430-residue protein sequence, read N- to C-terminus: Mitochondrial distribution and morphology protein 12 (430 aa).

The SMP-LTD domain occupies 1–430 (MSIDIDWERA…VYPSFWTFLI (430 aa)). 3 disordered regions span residues 61–117 (DLSD…YESN), 177–276 (TPLG…RMRE), and 352–377 (MGPETAGGGGGGDTSEPNSSRRKPSS). The segment covering 69–82 (FYEDDDENFSDSSE) has biased composition (acidic residues). Over residues 85–96 (SPTREPVDRYGN) the composition is skewed to basic and acidic residues. Composition is skewed to polar residues over residues 211–233 (SAQSRPSTANTGNTLPSRDSMSI) and 241–251 (ASQGMPNNQGQ). Residues 265–276 (PLDDTPPRRMRE) show a composition bias toward basic and acidic residues.

It belongs to the MDM12 family. Component of the ER-mitochondria encounter structure (ERMES) or MDM complex, composed of MMM1, MDM10, MDM12 and MDM34. An MMM1 homodimer associates with one molecule of MDM12 on each side in a pairwise head-to-tail manner, and the SMP-LTD domains of MMM1 and MDM12 generate a continuous hydrophobic tunnel for phospholipid trafficking.

Its subcellular location is the mitochondrion outer membrane. It localises to the endoplasmic reticulum membrane. In terms of biological role, component of the ERMES/MDM complex, which serves as a molecular tether to connect the endoplasmic reticulum (ER) and mitochondria. Components of this complex are involved in the control of mitochondrial shape and protein biogenesis, and function in nonvesicular lipid trafficking between the ER and mitochondria. MDM12 is required for the interaction of the ER-resident membrane protein MMM1 and the outer mitochondrial membrane-resident beta-barrel protein MDM10. The MDM12-MMM1 subcomplex functions in the major beta-barrel assembly pathway that is responsible for biogenesis of all mitochondrial outer membrane beta-barrel proteins, and acts in a late step after the SAM complex. The MDM10-MDM12-MMM1 subcomplex further acts in the TOM40-specific pathway after the action of the MDM12-MMM1 complex. Essential for establishing and maintaining the structure of mitochondria and maintenance of mtDNA nucleoids. The sequence is that of Mitochondrial distribution and morphology protein 12 from Ajellomyces capsulatus (strain G186AR / H82 / ATCC MYA-2454 / RMSCC 2432) (Darling's disease fungus).